Here is a 210-residue protein sequence, read N- to C-terminus: Holliday junction resolvase RecU (210 aa).

4 residues coordinate Mg(2+): threonine 87, aspartate 89, glutamate 102, and glutamine 121.

The protein belongs to the RecU family. The cofactor is Mg(2+).

It localises to the cytoplasm. It carries out the reaction Endonucleolytic cleavage at a junction such as a reciprocal single-stranded crossover between two homologous DNA duplexes (Holliday junction).. Its function is as follows. Endonuclease that resolves Holliday junction intermediates in genetic recombination. Cleaves mobile four-strand junctions by introducing symmetrical nicks in paired strands. Promotes annealing of linear ssDNA with homologous dsDNA. Required for DNA repair, homologous recombination and chromosome segregation. This is Holliday junction resolvase RecU from Lactobacillus delbrueckii subsp. bulgaricus (strain ATCC 11842 / DSM 20081 / BCRC 10696 / JCM 1002 / NBRC 13953 / NCIMB 11778 / NCTC 12712 / WDCM 00102 / Lb 14).